Consider the following 208-residue polypeptide: FMN-dependent NADH:quinone oxidoreductase 1 (208 aa).

17–19 contacts FMN; it reads SVS.

Belongs to the azoreductase type 1 family. In terms of assembly, homodimer. Requires FMN as cofactor.

It catalyses the reaction 2 a quinone + NADH + H(+) = 2 a 1,4-benzosemiquinone + NAD(+). The catalysed reaction is N,N-dimethyl-1,4-phenylenediamine + anthranilate + 2 NAD(+) = 2-(4-dimethylaminophenyl)diazenylbenzoate + 2 NADH + 2 H(+). Functionally, quinone reductase that provides resistance to thiol-specific stress caused by electrophilic quinones. Its function is as follows. Also exhibits azoreductase activity. Catalyzes the reductive cleavage of the azo bond in aromatic azo compounds to the corresponding amines. The polypeptide is FMN-dependent NADH:quinone oxidoreductase 1 (Listeria monocytogenes serotype 4b (strain F2365)).